We begin with the raw amino-acid sequence, 234 residues long: Probable plastid-lipid-associated protein 5, chloroplastic (234 aa).

A chloroplast-targeting transit peptide spans 1 to 45 (MALPWCLKTGVLTSPAAGFNHPSDSGFAVPTKLLSIRKGDRERLR).

Belongs to the PAP/fibrillin family.

Its subcellular location is the plastid. It is found in the chloroplast thylakoid. The chain is Probable plastid-lipid-associated protein 5, chloroplastic (PAP5) from Arabidopsis thaliana (Mouse-ear cress).